A 275-amino-acid chain; its full sequence is Transcriptional coregulator psa-3 (275 aa).

The region spanning 91-161 (TDDIKRLFQS…RRTVCHEALV (71 aa)) is the MEIS N-terminal domain. Residues 239–275 (QLPPNFLKPSNEKSPEKSEEEKSQKPSSSPKSPSLSD) are disordered. Positions 248–262 (SNEKSPEKSEEEKSQ) are enriched in basic and acidic residues. Positions 263–275 (KPSSSPKSPSLSD) are enriched in low complexity.

As to quaternary structure, interacts with homeobox protein ceh-20; the interaction is direct, facilitates nuclear localization of ceh-20 and may stabilize interaction of a ceh-20-nob-1 complex with DNA.

The protein resides in the nucleus. Functionally, probable transcription coregulator. Required for asymmetric cell divisions of the T hypodermal cells, and cell fate determination, in concert with homeobox proteins nob-1 and ceh-20. Acts downstream of the Wnt signaling pathway, and of ceh-20 and nob-1. This chain is Transcriptional coregulator psa-3, found in Caenorhabditis elegans.